The following is a 315-amino-acid chain: Olfactory receptor 2V1 (315 aa).

Over 1–31 (MGRWVNQSYTDGFFLLGIFSHSQTDLVLFSA) the chain is Extracellular. Residue Asn6 is glycosylated (N-linked (GlcNAc...) asparagine). Residues 32-52 (VMVVFTVALCGNVLLIFLIYL) form a helical membrane-spanning segment. At 53-58 (DAGLHT) the chain is on the cytoplasmic side. A helical transmembrane segment spans residues 59–79 (PMYFFLSQLSLMDLMLVCNIV). At 80–99 (PKMAANFLSGRKSISFVGCG) the chain is on the extracellular side. The cysteines at positions 98 and 180 are disulfide-linked. Residues 100–120 (IQIGFFVSLVGSEGLLLGLMA) form a helical membrane-spanning segment. Topologically, residues 121–149 (YDRYVAVSHPLHYPILMNQRVCLQITGSS) are cytoplasmic. A helical membrane pass occupies residues 150–170 (WAFGIIDGVIQMVAAMGLPYC). The Extracellular segment spans residues 171–198 (GSRSVDHFFCEVQALLKLACADTSLFDT). Residues 199-219 (LLFACCVFMLLLPFSIIMASY) form a helical membrane-spanning segment. Topologically, residues 220–238 (ACILGAVLRIRSAQAWKKA) are cytoplasmic. The helical transmembrane segment at 239–259 (LATCSSHLTAVTLFYGAAMFM) threads the bilayer. At 260–272 (YLRPRRYRAPSHD) the chain is on the extracellular side. The helical transmembrane segment at 273-293 (KVASIFYTVLTPMLNPLIYSL) threads the bilayer. Residues 294–315 (RNGEVMGALRKGLDRCRIGSQH) are Cytoplasmic-facing.

The protein belongs to the G-protein coupled receptor 1 family.

It is found in the cell membrane. Its function is as follows. Odorant receptor. The chain is Olfactory receptor 2V1 (OR2V1) from Homo sapiens (Human).